Consider the following 596-residue polypeptide: Arginine--tRNA ligase (596 aa).

Positions 128–138 (ANPTSSLHVGH) match the 'HIGH' region motif.

It belongs to the class-I aminoacyl-tRNA synthetase family. Monomer.

It is found in the cytoplasm. It carries out the reaction tRNA(Arg) + L-arginine + ATP = L-arginyl-tRNA(Arg) + AMP + diphosphate. The sequence is that of Arginine--tRNA ligase from Acinetobacter baylyi (strain ATCC 33305 / BD413 / ADP1).